The sequence spans 195 residues: Imidazoleglycerol-phosphate dehydratase (195 aa).

The protein belongs to the imidazoleglycerol-phosphate dehydratase family.

The protein resides in the cytoplasm. It carries out the reaction D-erythro-1-(imidazol-4-yl)glycerol 3-phosphate = 3-(imidazol-4-yl)-2-oxopropyl phosphate + H2O. Its pathway is amino-acid biosynthesis; L-histidine biosynthesis; L-histidine from 5-phospho-alpha-D-ribose 1-diphosphate: step 6/9. This chain is Imidazoleglycerol-phosphate dehydratase, found in Methylobacterium radiotolerans (strain ATCC 27329 / DSM 1819 / JCM 2831 / NBRC 15690 / NCIMB 10815 / 0-1).